The sequence spans 394 residues: Stabilizer of axonemal microtubules 2 (394 aa).

Mn regions lie at residues Ser110–Ile122, Asp144–Val158, Asn244–Ala256, Lys278–Arg292, Leu312–Leu324, and Val346–Ile360.

Belongs to the FAM154 family.

This Mus musculus (Mouse) protein is Stabilizer of axonemal microtubules 2 (Saxo2).